The primary structure comprises 545 residues: Phenylalanine--tRNA ligase beta subunit (545 aa).

The 77-residue stretch at 270–346 (LEPKERLLTT…KGYGYENIKV (77 aa)) folds into the B5 domain. Mg(2+)-binding residues include Asp324, Asp330, Glu333, and Asp334.

This sequence belongs to the phenylalanyl-tRNA synthetase beta subunit family. Type 2 subfamily. As to quaternary structure, tetramer of two alpha and two beta subunits. Mg(2+) is required as a cofactor.

It localises to the cytoplasm. The catalysed reaction is tRNA(Phe) + L-phenylalanine + ATP = L-phenylalanyl-tRNA(Phe) + AMP + diphosphate + H(+). This is Phenylalanine--tRNA ligase beta subunit from Methanosarcina acetivorans (strain ATCC 35395 / DSM 2834 / JCM 12185 / C2A).